The following is a 603-amino-acid chain: Autophagy-related protein 13a (603 aa).

Position 248 is a phosphoserine (Ser248). Disordered regions lie at residues 258 to 477 (PSPG…DDLD) and 498 to 518 (SHSLDRRKTSSSISQSLPLGR). Residues 301 to 315 (ATPNQSFSPAQSHQL) are compositionally biased toward polar residues. Over residues 320–331 (HDFHWSRTDAFG) the composition is skewed to basic and acidic residues. Polar residues-rich tracts occupy residues 371–386 (IPSSATLNRYVSSNFS) and 419–437 (SSRSGESPSGLMNQYPTQK). The span at 453–473 (LSSSDSPRFAFSRSPSRLSSQ) shows a compositional bias: low complexity.

The protein belongs to the ATG13 family. Plant subfamily. In terms of assembly, interacts with ATG1A. Interacts with ATG11 and ATG101. In terms of processing, phosphorylated during nutrient starvation. Dephosphorylated in nutrient-rich conditions.

The protein localises to the cytoplasmic vesicle. It localises to the autophagosome. Its function is as follows. Involved in autophagy in a nutritional condition dependent manner. The ATG1-ATG13 protein kinase complex regulates downstream events required for autophagosome enclosure and/or vacuolar delivery. Becomes a target of autophagy under nutrient starvation. Connects autophagy to plant nutritional status. In Arabidopsis thaliana (Mouse-ear cress), this protein is Autophagy-related protein 13a.